The sequence spans 75 residues: Nigwaprin-a (75 aa).

Positions Met-1–Gly-24 are cleaved as a signal peptide. Positions Arg-27–Ile-72 constitute a WAP domain. Disulfide bonds link Cys-34–Cys-60, Cys-43–Cys-64, Cys-47–Cys-59, and Cys-53–Cys-68.

It belongs to the venom waprin family. Expressed by the venom gland.

The protein resides in the secreted. Its function is as follows. Damages membranes of susceptible bacteria. Has no hemolytic activity. Not toxic to mice. Does not inhibit the proteinases elastase and cathepsin G. In Cryptophis nigrescens (Eastern small-eyed snake), this protein is Nigwaprin-a.